Reading from the N-terminus, the 210-residue chain is Probable GTP-binding protein EngB (210 aa).

Positions 30–204 (QGYEVAFAGR…YKVLAGWMEL (175 aa)) constitute an EngB-type G domain. GTP-binding positions include 38–45 (GRSNAGKS), 64–68 (GRTQL), 82–85 (DLPG), 149–152 (TKAD), and 182–185 (LFSA). Mg(2+) is bound by residues S45 and T66.

Belongs to the TRAFAC class TrmE-Era-EngA-EngB-Septin-like GTPase superfamily. EngB GTPase family. The cofactor is Mg(2+).

Its function is as follows. Necessary for normal cell division and for the maintenance of normal septation. The sequence is that of Probable GTP-binding protein EngB from Pseudomonas putida (strain W619).